We begin with the raw amino-acid sequence, 529 residues long: Arginine--tRNA ligase (529 aa).

The 'HIGH' region motif lies at 113 to 123 (ANPTGPLHIGH).

This sequence belongs to the class-I aminoacyl-tRNA synthetase family. As to quaternary structure, monomer.

It localises to the cytoplasm. It carries out the reaction tRNA(Arg) + L-arginine + ATP = L-arginyl-tRNA(Arg) + AMP + diphosphate. This Campylobacter curvus (strain 525.92) protein is Arginine--tRNA ligase.